Consider the following 283-residue polypeptide: uncharacterized protein (283 aa).

Asp-121 is an active-site residue.

The protein belongs to the pseudouridine synthase RluA family.

It carries out the reaction a uridine in RNA = a pseudouridine in RNA. This is an uncharacterized protein from Bacillus subtilis (strain 168).